We begin with the raw amino-acid sequence, 346 residues long: Elongation factor Ts (346 aa).

Positions 80–83 are involved in Mg(2+) ion dislocation from EF-Tu; that stretch reads TDFV.

The protein belongs to the EF-Ts family.

It is found in the cytoplasm. Its function is as follows. Associates with the EF-Tu.GDP complex and induces the exchange of GDP to GTP. It remains bound to the aminoacyl-tRNA.EF-Tu.GTP complex up to the GTP hydrolysis stage on the ribosome. The protein is Elongation factor Ts of Streptococcus thermophilus (strain CNRZ 1066).